The primary structure comprises 532 residues: MAPSFTARIQLFLLRALGFLIGLVGRAALVLGGPKFASKTPRPVTEPLLLLSGMQLAKLIRQRKVKCIDVVQAYINRIKDVNPMINGIVKYRFEEAMKEAHAVDQKLAEKQEDEATLENKWPFLGVPLTVKEAFQLQGMPNSSGLMNRRDAIAKTDATVVALLKGAGAIPLGITNCSELCMWYESSNKIYGRSNNPYDLQHIVGGSSGGEGCTLAAACSVIGVGSDIGGSIRMPAFFNGIFGHKPSPGVVPNKGQFPLAVGAQELFLCTGPMCRYAEDLAPMLKVMAGPGIKRLKLDTKVHLKDLKFYWMEHDGGSFLMSKVDQDLIMTQKKVVVHLETILGASVQHVKLKKMKYSFQLWIAMMSAKGHDGKEPVKFVDLLGDHGKHVSPLWELIKWCLGLSVYTIPSIGLALLEEKLRYSNEKYQKFKAVEESLRKELVDMLGDDGVFLYPSHPTVAPKHHVPLTRPFNFAYTGVFSALGLPVTQCPLGLNAKGLPLGIQVVAGPFNDHLTLAVAQYLEKTFGGWVCPGKF.

The helical transmembrane segment at 11–31 threads the bilayer; it reads LFLLRALGFLIGLVGRAALVL. Residues lysine 131 and serine 206 each act as charge relay system in the active site. Catalysis depends on serine 230, which acts as the Acyl-ester intermediate.

This sequence belongs to the amidase family. In terms of assembly, homodimer. Expressed in kidney, liver, lung, prostate, heart and ovary.

It localises to the membrane. It is found in the lipid droplet. It catalyses the reaction N-(5Z,8Z,11Z,14Z-eicosatetraenoyl)-ethanolamine + H2O = ethanolamine + (5Z,8Z,11Z,14Z)-eicosatetraenoate. The catalysed reaction is (9Z)-octadecenamide + H2O = (9Z)-octadecenoate + NH4(+). It carries out the reaction N-(9Z-octadecenoyl) ethanolamine + H2O = ethanolamine + (9Z)-octadecenoate. The enzyme catalyses N-hexadecanoylethanolamine + H2O = ethanolamine + hexadecanoate. With respect to regulation, inhibited by O-aryl carbamates and alpha-keto heterocytes. Its function is as follows. Catalyzes the hydrolysis of endogenous amidated lipids like the sleep-inducing lipid oleamide ((9Z)-octadecenamide), the endocannabinoid anandamide (N-(5Z,8Z,11Z,14Z-eicosatetraenoyl)-ethanolamine), as well as other fatty amides, to their corresponding fatty acids, thereby regulating the signaling functions of these molecules. Hydrolyzes monounsaturated substrate anandamide preferentially as compared to polyunsaturated substrates. The polypeptide is Fatty-acid amide hydrolase 2 (FAAH2) (Homo sapiens (Human)).